The following is a 182-amino-acid chain: Dihydrofolate reductase (182 aa).

The region spanning 3-180 is the DHFR domain; sequence RFNLIVAVCE…IKFEYKILEK (178 aa). NADP(+)-binding positions include alanine 9 and 15–21; that span reads GIGIRGD. 29 to 34 serves as a coordination point for substrate; the sequence is ELKYFS. Residue 53 to 55 coordinates NADP(+); it reads RKT. Substrate is bound at residue arginine 69. Residues 75–77 and 113–120 contribute to the NADP(+) site; these read STT and GGSGVYEE.

Belongs to the dihydrofolate reductase family. In terms of assembly, monomer. Interacts with vg.

It catalyses the reaction (6S)-5,6,7,8-tetrahydrofolate + NADP(+) = 7,8-dihydrofolate + NADPH + H(+). Its pathway is cofactor biosynthesis; tetrahydrofolate biosynthesis; 5,6,7,8-tetrahydrofolate from 7,8-dihydrofolate: step 1/1. By interacting with vestigial (vg), may control genes involved in DNA replication. Functionally, key enzyme in folate metabolism. Catalyzes an essential reaction for de novo glycine and purine synthesis, and for DNA precursor synthesis. This is Dihydrofolate reductase (Dhfr) from Drosophila melanogaster (Fruit fly).